Consider the following 259-residue polypeptide: TCF3 fusion partner homolog (259 aa).

Disordered stretches follow at residues Gly51–Arg72 and Glu141–Gln210. Phosphoserine is present on Ser167. At Thr172 the chain carries Phosphothreonine. 2 positions are modified to phosphoserine: Ser180 and Ser188. Thr203 carries the post-translational modification Phosphothreonine. Residue Lys222 forms a Glycyl lysine isopeptide (Lys-Gly) (interchain with G-Cter in SUMO2) linkage. Residues Val240–Asp259 form a disordered region. The residue at position 255 (Ser255) is a Phosphoserine.

Interacts with NOL3; translocates NOL3 into the nucleus and negatively regulated TFPT-induced cell death. Component of the chromatin remodeling INO80 complex; specifically part of a complex module associated with the N-terminus of INO80. As to expression, ubiquitously expressed. Abundant in the brain.

It is found in the nucleus. Functionally, appears to promote apoptosis in a p53/TP53-independent manner. Putative regulatory component of the chromatin remodeling INO80 complex which is involved in transcriptional regulation, DNA replication and probably DNA repair. The chain is TCF3 fusion partner homolog (Tfpt) from Rattus norvegicus (Rat).